Consider the following 151-residue polypeptide: Ribosome maturation factor RimP (151 aa).

This sequence belongs to the RimP family.

It is found in the cytoplasm. In terms of biological role, required for maturation of 30S ribosomal subunits. The protein is Ribosome maturation factor RimP of Shewanella denitrificans (strain OS217 / ATCC BAA-1090 / DSM 15013).